The following is a 156-amino-acid chain: Small ribosomal subunit protein uS7 (156 aa).

The protein belongs to the universal ribosomal protein uS7 family. As to quaternary structure, part of the 30S ribosomal subunit. Contacts proteins S9 and S11.

Its function is as follows. One of the primary rRNA binding proteins, it binds directly to 16S rRNA where it nucleates assembly of the head domain of the 30S subunit. Is located at the subunit interface close to the decoding center, probably blocks exit of the E-site tRNA. The chain is Small ribosomal subunit protein uS7 from Pediococcus pentosaceus (strain ATCC 25745 / CCUG 21536 / LMG 10740 / 183-1w).